Consider the following 287-residue polypeptide: Formamidopyrimidine-DNA glycosylase (287 aa).

Pro-2 serves as the catalytic Schiff-base intermediate with DNA. Glu-3 (proton donor) is an active-site residue. Residue Lys-61 is the Proton donor; for beta-elimination activity of the active site. DNA is bound by residues His-95, Arg-115, and Arg-157. The FPG-type zinc finger occupies 243-277 (NVYGRADQPCRRCGTPVRREAFMNRSSYSCPRCQP). The active-site Proton donor; for delta-elimination activity is Arg-267.

This sequence belongs to the FPG family. In terms of assembly, monomer. It depends on Zn(2+) as a cofactor.

It catalyses the reaction Hydrolysis of DNA containing ring-opened 7-methylguanine residues, releasing 2,6-diamino-4-hydroxy-5-(N-methyl)formamidopyrimidine.. The catalysed reaction is 2'-deoxyribonucleotide-(2'-deoxyribose 5'-phosphate)-2'-deoxyribonucleotide-DNA = a 3'-end 2'-deoxyribonucleotide-(2,3-dehydro-2,3-deoxyribose 5'-phosphate)-DNA + a 5'-end 5'-phospho-2'-deoxyribonucleoside-DNA + H(+). Its function is as follows. Involved in base excision repair of DNA damaged by oxidation or by mutagenic agents. Acts as a DNA glycosylase that recognizes and removes damaged bases. Has a preference for oxidized purines, such as 7,8-dihydro-8-oxoguanine (8-oxoG). Has AP (apurinic/apyrimidinic) lyase activity and introduces nicks in the DNA strand. Cleaves the DNA backbone by beta-delta elimination to generate a single-strand break at the site of the removed base with both 3'- and 5'-phosphates. The polypeptide is Formamidopyrimidine-DNA glycosylase (Salinispora arenicola (strain CNS-205)).